A 101-amino-acid chain; its full sequence is Small ribosomal subunit protein uS14 (101 aa).

This sequence belongs to the universal ribosomal protein uS14 family. As to quaternary structure, part of the 30S ribosomal subunit. Contacts proteins S3 and S10.

In terms of biological role, binds 16S rRNA, required for the assembly of 30S particles and may also be responsible for determining the conformation of the 16S rRNA at the A site. In Aliivibrio fischeri (strain MJ11) (Vibrio fischeri), this protein is Small ribosomal subunit protein uS14.